Consider the following 198-residue polypeptide: Recombination protein RecR (198 aa).

The C4-type zinc finger occupies 57 to 72; it reads CSVCGHITENDPCYIC. The 96-residue stretch at 80-175 folds into the Toprim domain; sequence SVICVVEDDK…KVTRLAQGLS (96 aa).

It belongs to the RecR family.

May play a role in DNA repair. It seems to be involved in an RecBC-independent recombinational process of DNA repair. It may act with RecF and RecO. The polypeptide is Recombination protein RecR (Staphylococcus aureus (strain JH1)).